We begin with the raw amino-acid sequence, 372 residues long: Fatty acid conjugase FAC2 B (372 aa).

Helical transmembrane passes span 44 to 64 and 74 to 94; these read YFLFHDIIVTCILFYVASNYI and IVWPVYWISQGVFLGRLWMIG. A Histidine box-1 motif is present at residues 95 to 99; the sequence is HECGH. The Histidine box-2 signature appears at 131-135; sequence HRNHH. The next 3 membrane-spanning stretches (helical) occupy residues 166-186, 217-237, and 240-260; these read IGLMITMLCKLTFGYAAYIMF, VLFSDIGICIVLYACYRIVTV, and AMPAFYVYGIPWVIMSAILFA. Residues 304-308 carry the Histidine box-3 motif; sequence HVIHH.

Belongs to the fatty acid desaturase type 1 family. Expressed exclusively in the developing seeds. Not detected in leaves.

It is found in the microsome membrane. The catalysed reaction is a (9Z,12Z)-octadecadienoyl-containing glycerolipid + AH2 + O2 = a (8E,10E,12Z)-octadecatrienoyl-containing glycerolipid + A + 2 H2O. It participates in lipid metabolism; polyunsaturated fatty acid biosynthesis. Its function is as follows. Fatty acid conjugase converting 18:2(9Z, 12Z) to calendic acid 18:3(8E, 10E, 12Z). Converts alpha-linolenic acid (18:3(9Z, 12Z, 15Z)) into 18:4(8E, 10E, 12Z, 15Z). Also has weak activity on the mono-unsaturates 16:1(9Z) and 18:1(9Z) producing two conjugated double bonds at delta(8) and delta(10) position. The chain is Fatty acid conjugase FAC2 B from Calendula officinalis (Pot marigold).